A 132-amino-acid polypeptide reads, in one-letter code: Vesicle transport protein GOT1A (132 aa).

At 1-9 (MISITEWQK) the chain is on the cytoplasmic side. A helical transmembrane segment spans residues 10 to 30 (IGVGITGFGIFFILFGTLLYF). Position 31 (D31) is a topological domain, lumenal. Residues 32–52 (SVLLAFGNLLFLTGLSLIIGL) form a helical membrane-spanning segment. The Cytoplasmic portion of the chain corresponds to 53-68 (RKTFWFFFQRHKLKGT). Residues 69–89 (SFLLGGVVIVLLRWPLLGMFL) traverse the membrane as a helical segment. The Lumenal portion of the chain corresponds to 90–100 (ETYGFFSLFKG). Residues 101–121 (FFPVAFGFLGNVCNIPFLGAL) form a helical membrane-spanning segment. Over 122-132 (FRRLQGTSSMV) the chain is Cytoplasmic.

Belongs to the GOT1 family.

It is found in the golgi apparatus membrane. Functionally, may be involved in fusion of ER-derived transport vesicles with the Golgi complex. In Homo sapiens (Human), this protein is Vesicle transport protein GOT1A.